The primary structure comprises 156 residues: UPF0262 protein Jann_2882 (156 aa).

Belongs to the UPF0262 family.

The polypeptide is UPF0262 protein Jann_2882 (Jannaschia sp. (strain CCS1)).